The sequence spans 363 residues: Sorting nexin-21 (363 aa).

Residues 1–11 are compositionally biased toward basic residues; it reads MASRLLHRLRH. The disordered stretch occupies residues 1-99; sequence MASRLLHRLR…PPPDGQRSSQ (99 aa). Positions 12–28 are enriched in low complexity; the sequence is ALASDGPGEAAAGPEAE. Over residues 46–56 the composition is skewed to polar residues; sequence SRLSGTLSFTS. The segment covering 57-71 has biased composition (acidic residues); it reads AEDDPDDEDEDDEAG. The 118-residue stretch at 119–236 folds into the PX domain; it reads QRLLFEVTSA…DFFVLPELRR (118 aa). Residues Arg161, Ser163, Lys188, and Arg202 each coordinate a 1,2-diacyl-sn-glycero-3-phospho-(1D-myo-inositol-3-phosphate).

The protein belongs to the sorting nexin family. As to quaternary structure, monomer.

The protein resides in the cytoplasmic vesicle membrane. Its subcellular location is the early endosome membrane. Functionally, binds to membranes enriched in phosphatidylinositol 3-phosphate (PtdIns(P3)) and phosphatidylinositol 4,5-bisphosphate. May be involved in several stages of intracellular trafficking. The sequence is that of Sorting nexin-21 from Mus musculus (Mouse).